A 224-amino-acid chain; its full sequence is Urease accessory protein UreF (224 aa).

It belongs to the UreF family. In terms of assembly, ureD, UreF and UreG form a complex that acts as a GTP-hydrolysis-dependent molecular chaperone, activating the urease apoprotein by helping to assemble the nickel containing metallocenter of UreC. The UreE protein probably delivers the nickel.

Its subcellular location is the cytoplasm. Required for maturation of urease via the functional incorporation of the urease nickel metallocenter. This Methylorubrum populi (strain ATCC BAA-705 / NCIMB 13946 / BJ001) (Methylobacterium populi) protein is Urease accessory protein UreF.